The sequence spans 285 residues: Probable endonuclease 4 (285 aa).

Residues His69, His109, Glu145, Asp179, His182, His216, Asp229, His231, and Glu261 each contribute to the Zn(2+) site.

This sequence belongs to the AP endonuclease 2 family. It depends on Zn(2+) as a cofactor.

It carries out the reaction Endonucleolytic cleavage to 5'-phosphooligonucleotide end-products.. Functionally, endonuclease IV plays a role in DNA repair. It cleaves phosphodiester bonds at apurinic or apyrimidinic (AP) sites, generating a 3'-hydroxyl group and a 5'-terminal sugar phosphate. The polypeptide is Probable endonuclease 4 (Salmonella typhimurium (strain LT2 / SGSC1412 / ATCC 700720)).